The primary structure comprises 176 residues: Large ribosomal subunit protein uL6 (176 aa).

It belongs to the universal ribosomal protein uL6 family. As to quaternary structure, part of the 50S ribosomal subunit.

Its function is as follows. This protein binds to the 23S rRNA, and is important in its secondary structure. It is located near the subunit interface in the base of the L7/L12 stalk, and near the tRNA binding site of the peptidyltransferase center. The protein is Large ribosomal subunit protein uL6 of Paraburkholderia phytofirmans (strain DSM 17436 / LMG 22146 / PsJN) (Burkholderia phytofirmans).